Consider the following 356-residue polypeptide: tRNA pseudouridine synthase D (356 aa).

Asp-84 (nucleophile) is an active-site residue. The TRUD domain occupies 159–302; sequence GVPNYYGPQR…RRGARRPIRV (144 aa).

The protein belongs to the pseudouridine synthase TruD family.

The catalysed reaction is uridine(13) in tRNA = pseudouridine(13) in tRNA. Functionally, responsible for synthesis of pseudouridine from uracil-13 in transfer RNAs. This is tRNA pseudouridine synthase D from Thermus thermophilus (strain ATCC 27634 / DSM 579 / HB8).